The chain runs to 132 residues: Methylglyoxal synthase (132 aa).

Residues 1-132 (MNIALIAHDQ…LLEWREIEDK (132 aa)) enclose the MGS-like domain. The substrate site is built by His-8 and Lys-12. The active-site Proton donor/acceptor is the Asp-60. Substrate is bound at residue His-87.

Belongs to the methylglyoxal synthase family.

It catalyses the reaction dihydroxyacetone phosphate = methylglyoxal + phosphate. In terms of biological role, catalyzes the formation of methylglyoxal from dihydroxyacetone phosphate. This Thermoanaerobacter pseudethanolicus (strain ATCC 33223 / 39E) (Clostridium thermohydrosulfuricum) protein is Methylglyoxal synthase.